The primary structure comprises 186 residues: Elongation factor P (186 aa).

The protein belongs to the elongation factor P family.

The protein localises to the cytoplasm. It functions in the pathway protein biosynthesis; polypeptide chain elongation. In terms of biological role, involved in peptide bond synthesis. Stimulates efficient translation and peptide-bond synthesis on native or reconstituted 70S ribosomes in vitro. Probably functions indirectly by altering the affinity of the ribosome for aminoacyl-tRNA, thus increasing their reactivity as acceptors for peptidyl transferase. The polypeptide is Elongation factor P (Shewanella denitrificans (strain OS217 / ATCC BAA-1090 / DSM 15013)).